Here is a 283-residue protein sequence, read N- to C-terminus: Thymidylate synthase (283 aa).

Residue R22 coordinates dUMP. Catalysis depends on C160, which acts as the Nucleophile. Residues 180–183 (RSCD), N191, and 221–223 (HIY) contribute to the dUMP site. D183 lines the (6R)-5,10-methylene-5,6,7,8-tetrahydrofolate pocket. A (6R)-5,10-methylene-5,6,7,8-tetrahydrofolate-binding site is contributed by S282.

This sequence belongs to the thymidylate synthase family. Bacterial-type ThyA subfamily. Homodimer.

It is found in the cytoplasm. The enzyme catalyses dUMP + (6R)-5,10-methylene-5,6,7,8-tetrahydrofolate = 7,8-dihydrofolate + dTMP. It functions in the pathway pyrimidine metabolism; dTTP biosynthesis. Its function is as follows. Catalyzes the reductive methylation of 2'-deoxyuridine-5'-monophosphate (dUMP) to 2'-deoxythymidine-5'-monophosphate (dTMP) while utilizing 5,10-methylenetetrahydrofolate (mTHF) as the methyl donor and reductant in the reaction, yielding dihydrofolate (DHF) as a by-product. This enzymatic reaction provides an intracellular de novo source of dTMP, an essential precursor for DNA biosynthesis. This is Thymidylate synthase from Haemophilus influenzae (strain 86-028NP).